The primary structure comprises 442 residues: 3-phosphoshikimate 1-carboxyvinyltransferase (442 aa).

The span at 1–11 (MQVSRPLTVSA) shows a compositional bias: polar residues. Residues 1–25 (MQVSRPLTVSASPKGLSGRTRVPGD) form a disordered region. Lys-26, Ser-27, and Arg-31 together coordinate 3-phosphoshikimate. Lys-26 is a binding site for phosphoenolpyruvate. Phosphoenolpyruvate is bound by residues Gly-98 and Arg-126. The 3-phosphoshikimate site is built by Ser-171, Gln-173, Asp-324, and Lys-351. Gln-173 lines the phosphoenolpyruvate pocket. Catalysis depends on Asp-324, which acts as the Proton acceptor. Residues Arg-355 and Arg-398 each contribute to the phosphoenolpyruvate site.

The protein belongs to the EPSP synthase family. As to quaternary structure, monomer.

The protein localises to the cytoplasm. It catalyses the reaction 3-phosphoshikimate + phosphoenolpyruvate = 5-O-(1-carboxyvinyl)-3-phosphoshikimate + phosphate. Its pathway is metabolic intermediate biosynthesis; chorismate biosynthesis; chorismate from D-erythrose 4-phosphate and phosphoenolpyruvate: step 6/7. In terms of biological role, catalyzes the transfer of the enolpyruvyl moiety of phosphoenolpyruvate (PEP) to the 5-hydroxyl of shikimate-3-phosphate (S3P) to produce enolpyruvyl shikimate-3-phosphate and inorganic phosphate. This Gluconobacter oxydans (strain 621H) (Gluconobacter suboxydans) protein is 3-phosphoshikimate 1-carboxyvinyltransferase.